The chain runs to 295 residues: Tyrosine recombinase XerD (295 aa).

The region spanning 1–85 (MNTIIEEYLN…TIRSFHQFAL (85 aa)) is the Core-binding (CB) domain. Positions 106 to 289 (KLPDVLEIDE…SKSQIRKMYT (184 aa)) constitute a Tyr recombinase domain. Residues R146, K170, H241, R244, and H267 contribute to the active site. The O-(3'-phospho-DNA)-tyrosine intermediate role is filled by Y276.

It belongs to the 'phage' integrase family. XerD subfamily. In terms of assembly, forms a cyclic heterotetrameric complex composed of two molecules of XerC and two molecules of XerD.

The protein localises to the cytoplasm. Site-specific tyrosine recombinase, which acts by catalyzing the cutting and rejoining of the recombining DNA molecules. The XerC-XerD complex is essential to convert dimers of the bacterial chromosome into monomers to permit their segregation at cell division. It also contributes to the segregational stability of plasmids. This Staphylococcus epidermidis (strain ATCC 35984 / DSM 28319 / BCRC 17069 / CCUG 31568 / BM 3577 / RP62A) protein is Tyrosine recombinase XerD.